Reading from the N-terminus, the 924-residue chain is Translation initiation factor IF-2 (924 aa).

A disordered region spans residues 118-325 (PSTAHREELA…QAPVVGGVRL (208 aa)). Pro residues-rich tracts occupy residues 150–173 (APHPGHPGMPTGPHPGPAPKPGGR) and 192–201 (IPRPPAPRPS). Positions 202-212 (ASPSSMSPRPG) are enriched in low complexity. Residues 229–295 (RPGGGRPGAP…GAAGAFGRPG (67 aa)) show a composition bias toward gly residues. Basic residues predominate over residues 299-308 (RRGRKSKRQK). The tr-type G domain maps to 420–591 (VRPPVVTVMG…AVLLTADAAL (172 aa)). Residues 429–436 (GHVDHGKT) are G1. 429–436 (GHVDHGKT) provides a ligand contact to GTP. The segment at 454–458 (GITQH) is G2. Residues 479–482 (DTPG) form a G3 region. Residues 479 to 483 (DTPGH) and 533 to 536 (NKID) contribute to the GTP site. A G4 region spans residues 533-536 (NKID). The interval 569 to 571 (SAK) is G5.

It belongs to the TRAFAC class translation factor GTPase superfamily. Classic translation factor GTPase family. IF-2 subfamily.

Its subcellular location is the cytoplasm. In terms of biological role, one of the essential components for the initiation of protein synthesis. Protects formylmethionyl-tRNA from spontaneous hydrolysis and promotes its binding to the 30S ribosomal subunits. Also involved in the hydrolysis of GTP during the formation of the 70S ribosomal complex. The chain is Translation initiation factor IF-2 from Mycobacterium leprae (strain Br4923).